The primary structure comprises 661 residues: MSERYSHIIQALGQSTFDKIQTCKILVVGAGGIGCELLKNLVLTGFKNIDIIDLDTIDISNLNRQFLFRKQHIGMSKAKIAKESVMKYNEQVNITAHHGDVKSSEFGSEFFKQFDLVMNALDNISARRHVNRLCLSVDVPMIESGTAGYLGQVSVIRKGKTECFECQPIAVPKQFAVCTIRTNPSAPIHCIVWAKMLFGKLFGPKDDDGGGDSSSLTDLDNNIIHGTEELGNIKRDEQLLIEKEKGFKRWVFHKIFHTDIETLIHMPDLWKDKQPPTSLKLDEILSSKEVSQAEEEGDQLIFKLPDQKQWTFKENVEVFLDCLEKLKQQFDQSNSKPMTWDKDDELALSFVCSASNIRSKIFGIPMKSRFDVKSMAGNIIPAIATTNAVIGGLIVMEAIKVVDGRFDQCLSTYLYQLPSGKRLLMPTQLEPQNPKCFVCNRSFIICRLNTEKTTISQFIDHVLKKSLAVNEPILTVGNDIIYEGGDQDLSKEEIEQRSKIEKKTLATHRLTNDTSLVVEDYNQDFQITITIQHTTDFDEDTKKLKKQQQKEKDQKEGKTTTIEKEEDDKFFEIIGKTSQTTTTTTTTTTTTESDNNSNNNKNNNNNNDVEEDDGFMFIEDQPSSTTTSSATPSISKKRKEIDTNESEDLDSSKKLKSNLQD.

ATP contacts are provided by residues 29–34 (GAGGIG), aspartate 53, 61–64 (NLNR), lysine 77, and 122–127 (DNISAR). Zn(2+) contacts are provided by cysteine 163 and cysteine 166. Cysteine 178 acts as the Glycyl thioester intermediate in catalysis. Zn(2+)-binding residues include cysteine 436 and cysteine 439. A disordered region spans residues 545–661 (KKQQQKEKDQ…SKKLKSNLQD (117 aa)). Over residues 548–563 (QQKEKDQKEGKTTTIE) the composition is skewed to basic and acidic residues. Low complexity-rich tracts occupy residues 577–607 (TSQT…NNNN) and 623–634 (SSTTTSSATPSI).

Belongs to the ubiquitin-activating E1 family. As to quaternary structure, heterodimer of sae1 and sae2. The complex binds sumo via sae2.

It is found in the nucleus. Its pathway is protein modification; protein sumoylation. Its function is as follows. The dimeric enzyme acts as an E1 ligase for sumo. It mediates ATP-dependent activation of sumo and formation of a thioester with a conserved cysteine residue on sae2. The chain is SUMO-activating enzyme subunit 2 (uba2) from Dictyostelium discoideum (Social amoeba).